We begin with the raw amino-acid sequence, 437 residues long: MEMDIDLDDIENLLPNTFNKYSSSCSDKKGCKTLKSGSKSPSLTIPKLQKQLEFYFSDANLYNDSFLRKLVLKSGEQRVEIETLLMFKKIRSLLKEHYGENYLILKANNDEYIKFICECVKGSRYIRLTKDKLAIKRKKKFDNRTAEELIAFTIRIDGELPSLETIEKAVYNCRNRSSESSDVNKPNKPCKFNGIYVKSFGTNAHCIYIGFLKHRYTECFRDCFSLQQITCFDYSCSSLISLKEAGEMKRRLKKEISKFVDSSVTGINNKNISNEKEEELSQSCFLKISKIPAGSKKYQIREALDCDRPSYIQYDDKETAVIRFKNSAMRTKFLESRNGAEILIKKNCVDIAKESNSKSFVNKYYQSCLIEEIDEATAQKIIKEIKDQRSSIDEIKAELKLDNKKYKPWSKYCGRKRRPVSKRKNKAINKMSTEVKK.

Positions 38-145 (SKSPSLTIPK…KRKKKFDNRT (108 aa)) constitute an HTH La-type RNA-binding domain. The region spanning 279 to 397 (ELSQSCFLKI…QRSSIDEIKA (119 aa)) is the xRRM domain. The span at 417 to 427 (RRPVSKRKNKA) shows a compositional bias: basic residues. The tract at residues 417–437 (RRPVSKRKNKAINKMSTEVKK) is disordered.

The protein belongs to the LARP7 family. As to quaternary structure, component of the telomerase holoenzyme complex composed minimally of the catalytic subunit p123 and the telomerase RNA template component. Post-translationally, the mature form of the protein is a protein of 43 kDa, which is derived from a 51 kDa precursor by proteolytic cleavage.

The protein localises to the nucleus. Its subcellular location is the chromosome. It is found in the telomere. In terms of biological role, RNA-binding protein required for assembly of the holoenzyme telomerase ribonucleoprotein (RNP) complex. Specifically binds telomerase RNA and promotes its assembly with catalytic subunit p123, thereby stimulating enzymatic activity and processivity of p123. Telomerase is a ribonucleoprotein enzyme essential that copies new telomeric repeats onto chromosome ends and functions to maintain cell division. This chain is La-related protein 7 homolog, found in Euplotes aediculatus (Ciliate).